Reading from the N-terminus, the 430-residue chain is GTPase Obg (430 aa).

Positions 1–158 constitute an Obg domain; it reads MFVDQVTISL…LDVTLELKLL (158 aa). The segment at 118–145 is disordered; the sequence is RGGRGGRGNSRFATPRNPAPDFSENGEP. The OBG-type G domain occupies 159-329; that stretch reads ADVGLVGFPS…LLYAIADKLD (171 aa). GTP-binding positions include 165 to 172, 190 to 194, 212 to 215, 282 to 285, and 310 to 312; these read GFPSVGKS, FTTIK, DLPG, NKMD, and STI. Positions 172 and 192 each coordinate Mg(2+). One can recognise an OCT domain in the interval 352–430; the sequence is KHTPSQDKFT…ILGGEFEFVE (79 aa).

It belongs to the TRAFAC class OBG-HflX-like GTPase superfamily. OBG GTPase family. Monomer. It depends on Mg(2+) as a cofactor.

The protein localises to the cytoplasm. Functionally, an essential GTPase which binds GTP, GDP and possibly (p)ppGpp with moderate affinity, with high nucleotide exchange rates and a fairly low GTP hydrolysis rate. Plays a role in control of the cell cycle, stress response, ribosome biogenesis and in those bacteria that undergo differentiation, in morphogenesis control. This chain is GTPase Obg, found in Staphylococcus haemolyticus (strain JCSC1435).